Consider the following 161-residue polypeptide: Cyclic pyranopterin monophosphate synthase (161 aa).

Substrate contacts are provided by residues 75-77 and 113-114; these read LCH and ME. The active site involves D128.

The protein belongs to the MoaC family. As to quaternary structure, homohexamer; trimer of dimers.

It catalyses the reaction (8S)-3',8-cyclo-7,8-dihydroguanosine 5'-triphosphate = cyclic pyranopterin phosphate + diphosphate. Its pathway is cofactor biosynthesis; molybdopterin biosynthesis. Functionally, catalyzes the conversion of (8S)-3',8-cyclo-7,8-dihydroguanosine 5'-triphosphate to cyclic pyranopterin monophosphate (cPMP). The chain is Cyclic pyranopterin monophosphate synthase from Shigella sonnei (strain Ss046).